The following is a 395-amino-acid chain: ETS-related transcription factor Elf-3 (395 aa).

The PNT domain occupies 69 to 155 (EPPAVLHLAE…AQLRDLTSSS (87 aa)). Residues 200–240 (ASPYYGSSYGPGAPSPGSSDFSTSGTDTPQSSHSSDSGGSD) are compositionally biased toward low complexity. A disordered region spans residues 200–275 (ASPYYGSSYG…HGKRKRGRPR (76 aa)). A compositionally biased stretch (basic and acidic residues) spans 246–265 (TDSKVFPRDGFPDYKKGEPK). Positions 266-275 (HGKRKRGRPR) are enriched in basic residues. Positions 297–379 (THLWEFIRDI…DGRRLVYKFG (83 aa)) form a DNA-binding region, ETS.

The protein belongs to the ETS family. Interacts with TBP. Interacts with CREBBP and EP300; these act as transcriptional coactivators of ELF3 and positively modulate its function. Interacts with XRCC5/KU86 and XRCC6/KU70; these inhibit the ability of ELF3 to bind DNA and negatively modulate its transcriptional activity. Associated with CLND7 and POU2F3. Interacts with ZNF768.

The protein localises to the cytoplasm. The protein resides in the nucleus. Transcriptional activator that binds and transactivates ETS sequences containing the consensus nucleotide core sequence GGA[AT]. Acts synergistically with POU2F3 to transactivate the SPRR2A promoter and with RUNX1 to transactivate the ANGPT1 promoter. Also transactivates collagenase, CCL20, CLND7, FLG, KRT8, NOS2, PTGS2, SPRR2B, TGFBR2 and TGM3 promoters. Represses KRT4 promoter activity. Involved in mediating vascular inflammation. May play an important role in epithelial cell differentiation and tumorigenesis. May be a critical downstream effector of the ERBB2 signaling pathway. May be associated with mammary gland development and involution. Plays an important role in the regulation of transcription with TATA-less promoters in preimplantation embryos, which is essential in preimplantation development. This chain is ETS-related transcription factor Elf-3, found in Rattus norvegicus (Rat).